The following is a 215-amino-acid chain: Ependymin-2 (215 aa).

A signal peptide spans 1–20 (MHTVKLLCVVFSCLCAVAWA). Asparagine 71 and asparagine 94 each carry an N-linked (GlcNAc...) asparagine glycan.

Belongs to the ependymin family. In terms of assembly, forms disulfide-linked dimers. In terms of processing, different glycosylation variants are known as EPD-beta and EPD-gamma. Post-translationally, binds calcium through the terminal sialic acids. As to expression, EPDs are synthesized in the meninx and secreted in the cerebrospinal fluid.

It is found in the secreted. In terms of biological role, may play a role in neural plasticity. May be involved during axon regeneration. The chain is Ependymin-2 (epd2) from Carassius auratus (Goldfish).